We begin with the raw amino-acid sequence, 78 residues long: Large ribosomal subunit protein bL28 (78 aa).

A disordered region spans residues methionine 1–proline 31.

This sequence belongs to the bacterial ribosomal protein bL28 family.

The protein is Large ribosomal subunit protein bL28 of Pseudarthrobacter chlorophenolicus (strain ATCC 700700 / DSM 12829 / CIP 107037 / JCM 12360 / KCTC 9906 / NCIMB 13794 / A6) (Arthrobacter chlorophenolicus).